Here is an 853-residue protein sequence, read N- to C-terminus: DNA topoisomerase 1 (853 aa).

Positions 3 to 136 constitute a Toprim domain; it reads KSLVIVESPV…KFRRVVFNEI (134 aa). Mg(2+)-binding residues include Glu-9 and Asp-105. A Topo IA-type catalytic domain is found at 152–565; it reads NMNRVYSQQA…SFFDNFSQQL (414 aa). An interaction with DNA region spans residues 186–191; sequence SAGRVQ. Tyr-313 functions as the O-(5'-phospho-DNA)-tyrosine intermediate in the catalytic mechanism. 3 C4-type zinc fingers span residues 589–621, 649–676, and 699–724; these read CSLCNKKMGIKTAVTGVFLSCLGYNSEPNEKRC, CKKCNLVMDVYLINENLKIFICINNPSC, and CEKCKNDMLFKTGRFGNFFMCINDTC.

Belongs to the type IA topoisomerase family. In terms of assembly, monomer. It depends on Mg(2+) as a cofactor.

The enzyme catalyses ATP-independent breakage of single-stranded DNA, followed by passage and rejoining.. Its function is as follows. Releases the supercoiling and torsional tension of DNA, which is introduced during the DNA replication and transcription, by transiently cleaving and rejoining one strand of the DNA duplex. Introduces a single-strand break via transesterification at a target site in duplex DNA. The scissile phosphodiester is attacked by the catalytic tyrosine of the enzyme, resulting in the formation of a DNA-(5'-phosphotyrosyl)-enzyme intermediate and the expulsion of a 3'-OH DNA strand. The free DNA strand then undergoes passage around the unbroken strand, thus removing DNA supercoils. Finally, in the religation step, the DNA 3'-OH attacks the covalent intermediate to expel the active-site tyrosine and restore the DNA phosphodiester backbone. This is DNA topoisomerase 1 from Buchnera aphidicola subsp. Schizaphis graminum (strain Sg).